The primary structure comprises 443 residues: Probable glycine dehydrogenase (decarboxylating) subunit 1 (443 aa).

This sequence belongs to the GcvP family. N-terminal subunit subfamily. In terms of assembly, the glycine cleavage system is composed of four proteins: P, T, L and H. In this organism, the P 'protein' is a heterodimer of two subunits.

The enzyme catalyses N(6)-[(R)-lipoyl]-L-lysyl-[glycine-cleavage complex H protein] + glycine + H(+) = N(6)-[(R)-S(8)-aminomethyldihydrolipoyl]-L-lysyl-[glycine-cleavage complex H protein] + CO2. In terms of biological role, the glycine cleavage system catalyzes the degradation of glycine. The P protein binds the alpha-amino group of glycine through its pyridoxal phosphate cofactor; CO(2) is released and the remaining methylamine moiety is then transferred to the lipoamide cofactor of the H protein. This chain is Probable glycine dehydrogenase (decarboxylating) subunit 1, found in Endomicrobium trichonymphae.